A 497-amino-acid chain; its full sequence is Galactose/methyl galactoside import ATP-binding protein MglA 1 (497 aa).

ABC transporter domains are found at residues 6–243 (LEMR…VGRD) and 256–494 (GKVR…VMSM). Residue 38 to 45 (GENGAGKS) coordinates ATP.

This sequence belongs to the ABC transporter superfamily. Galactose/methyl galactoside importer (TC 3.A.1.2.3) family. The complex is composed of one ATP-binding protein (MglA), two transmembrane proteins (MglC) and a solute-binding protein (MglB).

It is found in the cell inner membrane. The enzyme catalyses D-galactose(out) + ATP + H2O = D-galactose(in) + ADP + phosphate + H(+). It carries out the reaction methyl beta-D-galactoside(out) + ATP + H2O = methyl beta-D-galactoside(in) + ADP + phosphate + H(+). Functionally, part of the ABC transporter complex MglABC involved in galactose/methyl galactoside import. Responsible for energy coupling to the transport system. In Photobacterium profundum (strain SS9), this protein is Galactose/methyl galactoside import ATP-binding protein MglA 1.